Here is a 398-residue protein sequence, read N- to C-terminus: Argininosuccinate synthase (398 aa).

ATP contacts are provided by residues Ala-9–Ser-17 and Ala-36. Residues Tyr-87 and Ser-92 each contribute to the L-citrulline site. Gly-117 serves as a coordination point for ATP. L-aspartate contacts are provided by Thr-119, Asn-123, and Asp-124. Asn-123 provides a ligand contact to L-citrulline. L-citrulline is bound by residues Arg-127, Ser-176, Ser-185, Glu-261, and Tyr-273.

Belongs to the argininosuccinate synthase family. Type 1 subfamily. As to quaternary structure, homotetramer.

The protein localises to the cytoplasm. The catalysed reaction is L-citrulline + L-aspartate + ATP = 2-(N(omega)-L-arginino)succinate + AMP + diphosphate + H(+). It participates in amino-acid biosynthesis; L-arginine biosynthesis; L-arginine from L-ornithine and carbamoyl phosphate: step 2/3. This Desulfotalea psychrophila (strain LSv54 / DSM 12343) protein is Argininosuccinate synthase.